The following is a 79-amino-acid chain: Short neurotoxin 4 (79 aa).

The N-terminal stretch at 1-21 (MKTLLLTLVMVTIMCLDLGYT) is a signal peptide. Intrachain disulfides connect Cys24/Cys41, Cys34/Cys59, and Cys63/Cys71.

It belongs to the three-finger toxin family. Short-chain subfamily. Type III alpha-neurotoxin sub-subfamily. As to expression, expressed by the venom gland.

It localises to the secreted. Its function is as follows. Binds with high affinity to muscle nicotinic acetylcholine receptor (nAChR) and hinders acetylcholine binding to the receptor, thereby impairing neuromuscular transmission. Causes muscle paralysis, spasms and increased respiration. The chain is Short neurotoxin 4 from Pseudonaja textilis (Eastern brown snake).